Here is a 286-residue protein sequence, read N- to C-terminus: Main hemagglutinin component type C (286 aa).

One copy of the 1-alpha repeat lies at 2-55 (SQTNANDLRNNEVFFISPSNNTNKVLDKISQSEVKLWNKLSGANQKWRLIYDTN). Ricin B-type lectin domains are found at residues 12–140 (NEVF…FKFS) and 180–284 (DSSR…WIIN). A 1-beta repeat occupies 56–100 (KQAYKIKVMDNTSLILTWNAPLSSVSVKTDTNGDNQYWYLLQNYI). Residues 101–148 (SRNVIIRNYMNPNLVLQYNIDDTLMVSTQTSSSNQFFKFSNCIYEALN) form a 1-gamma repeat. One copy of the 2-alpha repeat lies at 149 to 193 (NRNCKLQTQLNSDRFLSKNLNSQIIVLWQWFDSSRQKWIIEYNET). Residues 167–183 (NLNSQIIVLWQWFDSSR) form a sugar-binding site 1 region. The stretch at 194-239 (KSAYTLKCQENNRYLTWIQNSNNYVETYQSTDSLIQYWNINYLDND) is one 2-beta repeat. Residues 240–286 (ASKYILYNLQDTNRVLDVYNSQIANGTHVIVDSYHGNTNQQWIINLI) form a 2-gamma repeat. A sugar-binding site 2 region spans residues 256–279 (DVYNSQIANGTHVIVDSYHGNTNQ).

In terms of assembly, botulinum toxins are produced as progenitor toxins of large molecular sizes of 12S (M toxin) and 16S (L toxin). M toxin consists of a non-toxic, non-hemagglutinin component (NTNHA) and the neurotoxin. L toxin consists of the M toxin and the 3 subcomponents of hemagglutinin (HA). HA is composed of subcomponents of 70, 33, and 17 kDa. The 70 kDa subcomponent undergoes proteolytic processing and is split into HA-55 (also called HA-53 and HA3b) and HA-22-23 (also called HA3a). The stoichiometry of the whole complex has been modeled as one BoNT/C, one NTNHA, three HA-70, six HA-33 and three HA-17.

The protein localises to the secreted. In terms of biological role, agglutinates human erythrocytes. The hemagglutinin (HA) component of the progenitor toxin protects the structural integrity of botulinum neurotoxin; may increase internalization of the neurotoxin into the bloodstream of the host. The hemagglutinin (HA) component is involved in binding to the upper small intestine through interactions with glycolipids and glycoproteins containing sialic acid moieties. Binds galactose or oligosaccharides with galactose at their non-reducing end. Binds eukaryotic host mucins; binding is inhibited by N-acetyl-beta-neuraminic acid, N-acetyl-D-galactosamine, galactose, and methyl N-acetyl-beta-neuraminic acid. Binds N-acetyl-beta-neuraminic acid, N-acetyl-D-galactosamine and galactose (but not glucose) via 2 sites. The chain is Main hemagglutinin component type C from Clostridium botulinum C (Clostridium botulinum C bacteriophage).